The following is a 185-amino-acid chain: HTH-type transcriptional regulator Hpr (185 aa).

An HTH marR-type domain is found at 13-157; that stretch reads AMIFSQRIAQ…LIAILRNIYG (145 aa). The segment at residues 63-86 is a DNA-binding region (H-T-H motif); the sequence is ISEIAKFGVMHVSTAFNFSKKLEE.

As to quaternary structure, homodimer.

Its function is as follows. Negative regulator of protease production and sporulation. This is HTH-type transcriptional regulator Hpr from Bacillus mycoides (strain KBAB4) (Bacillus weihenstephanensis).